An 83-amino-acid chain; its full sequence is uncharacterized protein (83 aa).

This is an uncharacterized protein from Bacillus anthracis.